Reading from the N-terminus, the 197-residue chain is Imidazoleglycerol-phosphate dehydratase (197 aa).

The protein belongs to the imidazoleglycerol-phosphate dehydratase family.

It localises to the cytoplasm. It catalyses the reaction D-erythro-1-(imidazol-4-yl)glycerol 3-phosphate = 3-(imidazol-4-yl)-2-oxopropyl phosphate + H2O. Its pathway is amino-acid biosynthesis; L-histidine biosynthesis; L-histidine from 5-phospho-alpha-D-ribose 1-diphosphate: step 6/9. This Gloeobacter violaceus (strain ATCC 29082 / PCC 7421) protein is Imidazoleglycerol-phosphate dehydratase.